The chain runs to 709 residues: Dual specificity calcium/calmodulin-dependent 3',5'-cyclic nucleotide phosphodiesterase 1C (709 aa).

Met1 carries the post-translational modification N-acetylmethionine. A calmodulin-binding region spans residues 123–146; sequence EKPRFKSIVHAVQAGIFVERMYRR. In terms of domain architecture, PDEase spans 151–528; sequence VGLSYPPAVI…ERWRAKVPKE (378 aa). His228 functions as the Proton donor in the catalytic mechanism. Residues His232, His268, Asp269, and Asp376 each contribute to the Zn(2+) site. Asp269 contributes to the Mg(2+) binding site. 2 disordered regions span residues 453–495 and 523–650; these read LIDE…APIN and AKVP…TCRL. The segment covering 483-495 has biased composition (polar residues); the sequence is VKTSGSEGSAPIN. Positions 523-556 are enriched in basic and acidic residues; sequence AKVPKEEKAKKEAEEKARLAAEEQQKEMEAKSQA. Residues 571–581 show a composition bias toward polar residues; the sequence is ETKNQVNGTRA. 2 stretches are compositionally biased toward basic and acidic residues: residues 582–598 and 606–633; these read NKSD…EKSS and DFKD…DGTK.

The protein belongs to the cyclic nucleotide phosphodiesterase family. PDE1 subfamily. Homodimer. Requires Zn(2+) as cofactor. Mg(2+) is required as a cofactor. Isoform PDE1C2 is present in the heart and brain and, at lower levels in the lung, liver, kidney and skeletal muscle. Isoform PDE1C1 is expressed in the heart and brain and, at lower levels in lung. Also expressed at low levels in uterus and testis.

It localises to the lysosome. The enzyme catalyses a nucleoside 3',5'-cyclic phosphate + H2O = a nucleoside 5'-phosphate + H(+). The catalysed reaction is 3',5'-cyclic GMP + H2O = GMP + H(+). It catalyses the reaction 3',5'-cyclic AMP + H2O = AMP + H(+). With respect to regulation, type I PDE are activated by the binding of calmodulin in the presence of Ca(2+). Its function is as follows. Calmodulin-dependent cyclic nucleotide phosphodiesterase with a dual specificity for the second messengers cAMP and cGMP, which are key regulators of many important physiological processes. Has a high affinity for both cAMP and cGMP. Modulates the amplitude and duration of the cAMP signal in sensory cilia in response to odorant stimulation, hence contributing to the generation of action potentials. Regulates smooth muscle cell proliferation. Regulates the stability of growth factor receptors, including PDGFRB. The sequence is that of Dual specificity calcium/calmodulin-dependent 3',5'-cyclic nucleotide phosphodiesterase 1C from Homo sapiens (Human).